Reading from the N-terminus, the 542-residue chain is MLYSLLLCECLWLITAYAHDDEWIDPTDMLNYDAASGRMRKSQVKYGISEKEEVNPDLSCANELSECYNRLDSLTYKIDECEKQKRKDYESQSNPVFRRYLNKILIETKKLGLPDENKHDMHYDAEIILKRQTLLEIQKFLSGEDWKPGALDDALSDILINFKFHDFETWKWRFEEFFGVDPYNVFMVLLCLLCIVALVATELWTYVRWYTQLKRVFFISFLISLGWNWMYLYKLAFAQHQAEVAKMEPLNNVCAEKMNWSGSLWEWLRSSWTYKDDPCQKYYELLLVNPIWLVPPTKALAVTFTNFVTEPLKHVGKGAGEFIKALMKEIPVLLHIPVLIIMALAVLSFCYGAGKSVNMLRHVGGPEREAPQALQAGERRRQQKIDYRPHGGAGDADFYYRGQISPIEQGPNDNTYEGRRDVLRERDVGLRFQTGNKSPEVLRPFDLQEAEAREHPKVVPGLKSPNLESKPREMGEIPGESTPTESSTESSQPAKPVSGQKVSEGVEGCPAVEKAQLRTDAAGGPEEGSTCSPASTAVEVCG.

The N-terminal stretch at 1 to 18 (MLYSLLLCECLWLITAYA) is a signal peptide. At 19–184 (HDDEWIDPTD…EEFFGVDPYN (166 aa)) the chain is on the lumenal side. The helical transmembrane segment at 185–205 (VFMVLLCLLCIVALVATELWT) threads the bilayer. The Cytoplasmic portion of the chain corresponds to 206-216 (YVRWYTQLKRV). Residues 217-237 (FFISFLISLGWNWMYLYKLAF) form a helical membrane-spanning segment. Over 238-329 (AQHQAEVAKM…GEFIKALMKE (92 aa)) the chain is Lumenal. The helical transmembrane segment at 330 to 350 (IPVLLHIPVLIIMALAVLSFC) threads the bilayer. The Cytoplasmic segment spans residues 351–542 (YGAGKSVNML…PASTAVEVCG (192 aa)). The tract at residues 369–394 (EAPQALQAGERRRQQKIDYRPHGGAG) is disordered. The segment covering 377–389 (GERRRQQKIDYRP) has biased composition (basic and acidic residues). A phosphoserine mark is found at Ser-438 and Ser-464. The segment at 452–542 (AREHPKVVPG…PASTAVEVCG (91 aa)) is disordered. Over residues 480-491 (ESTPTESSTESS) the composition is skewed to low complexity. Thr-482 is modified (phosphothreonine). Ser-532 carries the post-translational modification Phosphoserine.

It belongs to the chloride channel MCLC family. As to quaternary structure, homomultimers. Interacts with mitochondrial protein PIGBOS1 (via C-terminus); the interaction occurs at the mitochondria-associated endoplasmic reticulum (ER) membrane, a zone of contact between the ER and mitochondrial membranes, but does not appear to play a role in ER-mitochondria tethering and is not affected by ER stress. Interacts with CALR.

The protein resides in the endoplasmic reticulum membrane. It carries out the reaction chloride(in) = chloride(out). The enzyme catalyses bromide(in) = bromide(out). It catalyses the reaction nitrate(in) = nitrate(out). The catalysed reaction is fluoride(in) = fluoride(out). In terms of biological role, anion-selective channel with Ca(2+)-dependent and voltage-independent gating. Permeable to small monovalent anions with selectivity for bromide &gt; chloride &gt; nitrate &gt; fluoride. Operates in the endoplasmic reticulum (ER) membrane where it mediates chloride efflux to compensate for the loss of positive charges from the ER lumen upon Ca(2+) release. Contributes to the maintenance of ER Ca(2+) pools and activation of unfolded protein response to prevent accumulation of misfolded proteins in the ER lumen. Particularly involved in ER homeostasis mechanisms underlying motor neurons and retinal photoreceptors survival. This Bos taurus (Bovine) protein is Chloride channel CLIC-like protein 1 (CLCC1).